The sequence spans 608 residues: Thiol:disulfide interchange protein DsbD (608 aa).

The first 22 residues, 1 to 22, serve as a signal peptide directing secretion; sequence MKNLLSLCFLMLAAFTLNPAAA. A disulfide bridge links C135 with C141. Over residues 161-173 the composition is skewed to polar residues; the sequence is SAPSSDAAQQTNE. Residues 161–180 form a disordered region; the sequence is SAPSSDAAQQTNEGEVKKSE. The next 8 membrane-spanning stretches (helical) occupy residues 194–214, 241–261, 273–293, 314–334, 352–372, 387–407, 414–434, and 456–476; these read LLTL…PCVF, FFYV…VAMA, IVLI…FGVF, GGSI…ASPC, VVLG…PLLI, WMNI…VFLL, VASQ…FYVA, and SLVI…LIYP. A disulfide bridge links C212 with C334. One can recognise a Thioredoxin domain in the interval 469–608; it reads LAYQLIYPSS…FSAHVKSIFK (140 aa). C522 and C525 are joined by a disulfide.

The protein belongs to the thioredoxin family. DsbD subfamily.

Its subcellular location is the cell inner membrane. It carries out the reaction [protein]-dithiol + NAD(+) = [protein]-disulfide + NADH + H(+). The catalysed reaction is [protein]-dithiol + NADP(+) = [protein]-disulfide + NADPH + H(+). Required to facilitate the formation of correct disulfide bonds in some periplasmic proteins and for the assembly of the periplasmic c-type cytochromes. Acts by transferring electrons from cytoplasmic thioredoxin to the periplasm. This transfer involves a cascade of disulfide bond formation and reduction steps. The chain is Thiol:disulfide interchange protein DsbD from Colwellia psychrerythraea (strain 34H / ATCC BAA-681) (Vibrio psychroerythus).